Reading from the N-terminus, the 57-residue chain is Small ribosomal subunit protein bS21 (57 aa).

Residues 32–57 are disordered; sequence VRKRKHFEKPSVKRKKKSEAARKRKF. The span at 33–57 shows a compositional bias: basic residues; that stretch reads RKRKHFEKPSVKRKKKSEAARKRKF.

Belongs to the bacterial ribosomal protein bS21 family.

The chain is Small ribosomal subunit protein bS21 from Shouchella clausii (strain KSM-K16) (Alkalihalobacillus clausii).